Consider the following 565-residue polypeptide: NAD-dependent malic enzyme (565 aa).

The active-site Proton donor is the Tyr104. Arg157 is an NAD(+) binding site. Residue Lys175 is the Proton acceptor of the active site. 3 residues coordinate a divalent metal cation: Glu246, Asp247, and Asp270. Positions 270 and 418 each coordinate NAD(+).

It belongs to the malic enzymes family. In terms of assembly, homotetramer. Mg(2+) serves as cofactor. The cofactor is Mn(2+).

The catalysed reaction is (S)-malate + NAD(+) = pyruvate + CO2 + NADH. It carries out the reaction oxaloacetate + H(+) = pyruvate + CO2. This Sodalis glossinidius (strain morsitans) protein is NAD-dependent malic enzyme.